Here is a 326-residue protein sequence, read N- to C-terminus: Nucleoporin Nup37 (326 aa).

WD repeat units follow at residues 6-54 (SRNA…FQEE), 61-109 (IQYK…LFTS), 115-154 (NEYKVLEGHTDFINGLVFDPKEGQEIASVSDDHTCRIWNL), 159-195 (TAHFVLHSPGMSVCWHPEETFKLMVAEKNGTIRFYDL), 199-237 (QAILSLESEQVPLMSAHWCLKNTFKVGAVAGNDWLIWDI), 242-282 (YPQN…QFQI), and 287-324 (HPQPILMGSVAVGSGLSWHRTLPLCVIGGDHKLLFWVT).

In terms of assembly, component of the Nup107-160 subcomplex of the nuclear pore complex (NPC). The Nup107-160 subcomplex includes NUP160, NUP133, NUP107, NUP98, NUP85, NUP43, NUP37, SEH1 and SEC13.

It localises to the chromosome. The protein localises to the centromere. It is found in the kinetochore. The protein resides in the nucleus. Its subcellular location is the nuclear pore complex. Component of the Nup107-160 subcomplex of the nuclear pore complex (NPC). The Nup107-160 subcomplex is required for the assembly of a functional NPC. The Nup107-160 subcomplex is also required for normal kinetochore microtubule attachment, mitotic progression and chromosome segregation. This is Nucleoporin Nup37 (NUP37) from Homo sapiens (Human).